Consider the following 71-residue polypeptide: Small ribosomal subunit protein bS21 (71 aa).

It belongs to the bacterial ribosomal protein bS21 family.

In Hahella chejuensis (strain KCTC 2396), this protein is Small ribosomal subunit protein bS21.